Here is a 161-residue protein sequence, read N- to C-terminus: Allophycocyanin beta chain (161 aa).

Asn-71 is modified (N4-methylasparagine). Cys-81 serves as a coordination point for (2R,3E)-phycocyanobilin.

This sequence belongs to the phycobiliprotein family. Heterodimer of an alpha and a beta chain. In terms of processing, contains one covalently linked phycocyanobilin chromophore.

It is found in the plastid. It localises to the chloroplast thylakoid membrane. Light-harvesting photosynthetic bile pigment-protein from the phycobiliprotein complex. Allophycocyanin has a maximum absorption at approximately 650 nanometers. This Pyropia haitanensis (Red seaweed) protein is Allophycocyanin beta chain (apcB).